We begin with the raw amino-acid sequence, 235 residues long: Small ribosomal subunit protein eS6 (235 aa).

Phosphoserine occurs at positions 229 and 230.

The protein belongs to the eukaryotic ribosomal protein eS6 family. In terms of processing, phosphorylated.

The sequence is that of Small ribosomal subunit protein eS6 (RPS6) from Kluyveromyces marxianus (Yeast).